Reading from the N-terminus, the 355-residue chain is Probable zinc transporter 12 (355 aa).

A signal peptide spans 1–25 (MSRFRKTLVSAFVLCLVIFPLLVSA). Residues 26 to 50 (AEEENQCGGSKGGSAAEKASALKYK) are Extracellular-facing. Residues 51 to 71 (IIAFFSILIAGVFGVCLPIFG) traverse the membrane as a helical segment. Residues 72 to 77 (LKTESN) lie on the Cytoplasmic side of the membrane. A helical transmembrane segment spans residues 78-98 (FFMYVKAFAAGVILATGFVHI). The Extracellular segment spans residues 99–116 (LPDATESLTSSCLGEEPP). The helical transmembrane segment at 117–137 (WGDFPMTGLVAMAASILTMLI) threads the bilayer. At 138–200 (ESFASGYLNR…DDDHIDMRKK (63 aa)) the chain is on the cytoplasmic side. The segment at 156–183 (TLPVSTGGEEEHAHTGSAHTHASQGHSH) is disordered. The chain crosses the membrane as a helical span at residues 201 to 221 (IVTQILELGIVVHSVIIGISL). Residues 222–231 (GASPSVSTIK) are Extracellular-facing. Residues 232–252 (PLIAAITFHQLFEGFGLGGCI) form a helical membrane-spanning segment. Over 253 to 261 (SEAKFRVKK) the chain is Cytoplasmic. The helical transmembrane segment at 262-282 (IWVMLMFFALTAPIGIGIGIG) threads the bilayer. At 283–302 (VAEIYNENSPMALKVSGFLN) the chain is on the extracellular side. The helical transmembrane segment at 303–323 (ATASGILIYMALVDLVAPLFM) threads the bilayer. At 324 to 334 (NQKTQSSMKIQ) the chain is on the cytoplasmic side. A helical membrane pass occupies residues 335–355 (VACSVSLVVGAGLMSLLAIWA).

This sequence belongs to the ZIP transporter (TC 2.A.5) family.

It localises to the cell membrane. In terms of biological role, zinc transporter involved in zinc uptake in roots. Targeted by BZIP23 transcription factor in response to zinc-deficient conditions. The sequence is that of Probable zinc transporter 12 (ZIP12) from Arabidopsis thaliana (Mouse-ear cress).